The sequence spans 122 residues: Large ribosomal subunit protein uL14 (122 aa).

This sequence belongs to the universal ribosomal protein uL14 family. In terms of assembly, part of the 50S ribosomal subunit. Forms a cluster with proteins L3 and L19. In the 70S ribosome, L14 and L19 interact and together make contacts with the 16S rRNA in bridges B5 and B8.

Functionally, binds to 23S rRNA. Forms part of two intersubunit bridges in the 70S ribosome. In Bacillus velezensis (strain DSM 23117 / BGSC 10A6 / LMG 26770 / FZB42) (Bacillus amyloliquefaciens subsp. plantarum), this protein is Large ribosomal subunit protein uL14.